A 436-amino-acid chain; its full sequence is Citrate synthase (436 aa).

Active-site residues include His313 and Asp371.

This sequence belongs to the citrate synthase family. In terms of assembly, homohexamer.

It catalyses the reaction oxaloacetate + acetyl-CoA + H2O = citrate + CoA + H(+). It participates in carbohydrate metabolism; tricarboxylic acid cycle; isocitrate from oxaloacetate: step 1/2. This is Citrate synthase (aarA) from Acetobacter aceti.